A 187-amino-acid chain; its full sequence is Ribosome-recycling factor (187 aa).

This sequence belongs to the RRF family.

It is found in the cytoplasm. Its function is as follows. Responsible for the release of ribosomes from messenger RNA at the termination of protein biosynthesis. May increase the efficiency of translation by recycling ribosomes from one round of translation to another. This chain is Ribosome-recycling factor, found in Nitrosococcus oceani (strain ATCC 19707 / BCRC 17464 / JCM 30415 / NCIMB 11848 / C-107).